The chain runs to 441 residues: Amino-acid acetyltransferase (441 aa).

In terms of domain architecture, N-acetyltransferase spans 295–434 (EQVRRATIND…QALYNYQRRS (140 aa)).

The protein belongs to the acetyltransferase family. ArgA subfamily. In terms of assembly, homohexamer.

Its subcellular location is the cytoplasm. It catalyses the reaction L-glutamate + acetyl-CoA = N-acetyl-L-glutamate + CoA + H(+). It participates in amino-acid biosynthesis; L-arginine biosynthesis; N(2)-acetyl-L-ornithine from L-glutamate: step 1/4. The polypeptide is Amino-acid acetyltransferase (Pectobacterium carotovorum subsp. carotovorum (strain PC1)).